Reading from the N-terminus, the 169-residue chain is Protein kinase-interacting protein PIKP1 (169 aa).

In terms of assembly, interacts with protein kinase PK1.

Plays a role in the stimulation of the viral kinase PK1 function in very late transcription and in expression of genes required for budded virus production. The protein is Protein kinase-interacting protein PIKP1 (AC24) of Lepidoptera (butterflies and moths).